The following is a 499-amino-acid chain: Lysine--tRNA ligase (499 aa).

Mg(2+)-binding residues include glutamate 407 and glutamate 414.

Belongs to the class-II aminoacyl-tRNA synthetase family. Homodimer. Mg(2+) is required as a cofactor.

The protein resides in the cytoplasm. It catalyses the reaction tRNA(Lys) + L-lysine + ATP = L-lysyl-tRNA(Lys) + AMP + diphosphate. The protein is Lysine--tRNA ligase of Lactiplantibacillus plantarum (strain ATCC BAA-793 / NCIMB 8826 / WCFS1) (Lactobacillus plantarum).